The primary structure comprises 1097 residues: Protein STICHEL-like 3 (1097 aa).

Disordered regions lie at residues 1–22 (MTTTTTTTTRVASSSSTRNNRI), 74–168 (SLRD…YRIG), 220–293 (NVRP…GFGE), 321–358 (GRSLSCGMSDSKGGRKGETNERNGSDKMMIQSDDDSSS), and 400–436 (DSDLASEGRSGEKKHKKKSHVNARHRHRQQHQSLTEK). The span at 10-20 (RVASSSSTRNN) shows a compositional bias: polar residues. Basic and acidic residues predominate over residues 95–113 (LPKKGDLVEGGRRSVDLKK). Residues 126-136 (PVVNFGTSKVT) show a composition bias toward polar residues. The span at 137–168 (PSDERSGPVSGERDSGRRVKREESSRKSYRIG) shows a compositional bias: basic and acidic residues. The segment covering 227 to 241 (YGGGGGGGNTRGCAG) has biased composition (gly residues). The segment covering 245 to 259 (RPKRRKFRGTRRVRG) has biased composition (basic residues). Basic and acidic residues-rich tracts occupy residues 281–291 (VEKHDGEKEGF) and 332–345 (KGGRKGETNERNGS). The span at 346-358 (DKMMIQSDDDSSS) shows a compositional bias: low complexity. Basic residues predominate over residues 411-429 (EKKHKKKSHVNARHRHRQQ). 472–479 (GPNGTGKT) contacts ATP. Residues Cys-491, Cys-500, Cys-503, and Cys-506 each coordinate Zn(2+). The stretch at 742 to 770 (KEDMEKLRQALKTLSEAEKQLRVSNDKLT) forms a coiled coil. Disordered stretches follow at residues 790–828 (SSTADTGGRESSDHHLDPSSDAAGGRSSGLDRRRGDSRK), 913–932 (DPRNNVHHHHHHPTVKDKSL), and 956–1003 (VTES…SQSI). Basic and acidic residues-rich tracts occupy residues 796-807 (GGRESSDHHLDP) and 818-828 (GLDRRRGDSRK). Residues 993–1003 (ASQSQNQSQSI) are compositionally biased toward polar residues.

This sequence belongs to the DnaX/STICHEL family.

This is Protein STICHEL-like 3 from Arabidopsis thaliana (Mouse-ear cress).